A 181-amino-acid chain; its full sequence is Thymidine kinase (181 aa).

13 to 20 (GPMFSGKS) lines the ATP pocket. The active-site Proton acceptor is Glu85. A substrate-binding site is contributed by Phe115. Residues Cys140 and Cys143 each coordinate Zn(2+). 159 to 163 (IEIIG) is a substrate binding site. Zn(2+) contacts are provided by Cys172 and Cys175.

It belongs to the thymidine kinase family.

The catalysed reaction is thymidine + ATP = dTMP + ADP + H(+). The chain is Thymidine kinase (TK) from Yaba monkey tumor virus (strain VR587) (YMTV).